A 963-amino-acid polypeptide reads, in one-letter code: Transcription factor cbf12 (963 aa).

2 disordered regions span residues 130–207 and 248–289; these read NPSN…SQGL and VNMN…PPQK. 2 stretches are compositionally biased toward polar residues: residues 143–207 and 249–289; these read FENN…SQGL and NMNS…PPQK.

It belongs to the Su(H) family.

It localises to the nucleus. Functionally, transcription factor which function may be to trigger the increase of adhesion at stationary phase, possibly by counteracting or replacing cbf11 at the respective promoters. May also play a cbf11-antagonistic role in the regulation of a number of other important processes such as extracellular material production, colony morphogenesis, ploidy maintenance, or meiosis. This chain is Transcription factor cbf12 (cbf12), found in Schizosaccharomyces pombe (strain 972 / ATCC 24843) (Fission yeast).